Reading from the N-terminus, the 404-residue chain is Formate-dependent phosphoribosylglycinamide formyltransferase (404 aa).

N(1)-(5-phospho-beta-D-ribosyl)glycinamide contacts are provided by residues 27–28 (EL) and glutamate 87. ATP contacts are provided by residues arginine 120, lysine 162, 167 to 172 (SSGKGQ), 202 to 205 (EGFI), and glutamate 210. An ATP-grasp domain is found at 125 to 320 (RLAAETLGLP…EFELHARALL (196 aa)). Residues glutamate 279 and glutamate 291 each contribute to the Mg(2+) site. N(1)-(5-phospho-beta-D-ribosyl)glycinamide-binding positions include aspartate 298, lysine 367, and 374–375 (RR).

Belongs to the PurK/PurT family. In terms of assembly, homodimer.

The catalysed reaction is N(1)-(5-phospho-beta-D-ribosyl)glycinamide + formate + ATP = N(2)-formyl-N(1)-(5-phospho-beta-D-ribosyl)glycinamide + ADP + phosphate + H(+). It participates in purine metabolism; IMP biosynthesis via de novo pathway; N(2)-formyl-N(1)-(5-phospho-D-ribosyl)glycinamide from N(1)-(5-phospho-D-ribosyl)glycinamide (formate route): step 1/1. Functionally, involved in the de novo purine biosynthesis. Catalyzes the transfer of formate to 5-phospho-ribosyl-glycinamide (GAR), producing 5-phospho-ribosyl-N-formylglycinamide (FGAR). Formate is provided by PurU via hydrolysis of 10-formyl-tetrahydrofolate. This chain is Formate-dependent phosphoribosylglycinamide formyltransferase, found in Bordetella pertussis (strain Tohama I / ATCC BAA-589 / NCTC 13251).